The primary structure comprises 983 residues: Kinesin-like protein KIN-14I (983 aa).

Residues 44–166 form the Calponin-homology (CH) domain; the sequence is ASRRYEAANW…CVLAIKSYDE (123 aa). Polar residues-rich tracts occupy residues 203–214 and 278–287; these read SLSRTSSINNEK and ESTSSQNNRS. 2 disordered regions span residues 203–227 and 276–295; these read SLSR…LSSP and PRES…LGER. Residues 399-724 form the Kinesin motor domain; that stretch reads SIRVYCRVRP…LKFAERVATV (326 aa). Position 481–488 (481–488) interacts with ATP; it reads GQTGSGKT. Residues 731–758 are a coiled coil; sequence VNNDTSDVKELKEQIATLKAALARKEAE. 2 disordered regions span residues 802 to 824 and 921 to 983; these read TVNS…DDRS and TRSN…NARH. A compositionally biased stretch (polar residues) spans 939 to 951; the sequence is SPQSRNNSNNTVS.

The protein belongs to the TRAFAC class myosin-kinesin ATPase superfamily. Kinesin family. KIN-14 subfamily.

This is Kinesin-like protein KIN-14I from Arabidopsis thaliana (Mouse-ear cress).